Here is a 246-residue protein sequence, read N- to C-terminus: Agamous-like MADS-box protein AGL5 (246 aa).

One can recognise an MADS-box domain in the interval 18–72 (RGKIEIKRIENTTNRQVTFCKRRNGLLKKAYELSVLCDAEVALVIFSTRGRLYEY). The K-box domain maps to 102–192 (TQYYQQEASK…RSKITERTGL (91 aa)).

As to quaternary structure, interacts with AGL15 and AGL16.

The protein localises to the nucleus. In terms of biological role, probable transcription factor. Interacts genetically with TT16/AGL32 in a partially antagonistic manner during flower development. Is essential for the coordination of cell divisions in ovule, seed coat development and endosperm formation. This is Agamous-like MADS-box protein AGL5 (AGL5) from Arabidopsis thaliana (Mouse-ear cress).